Here is a 172-residue protein sequence, read N- to C-terminus: C-phycocyanin beta subunit (172 aa).

N4-methylasparagine is present on Asn-72. (2R,3E)-phycocyanobilin contacts are provided by Cys-82 and Cys-153.

The protein belongs to the phycobiliprotein family. The alpha and beta subunits exhibit high affinity for one another and form heterodimers. These heterodimers form heterohexamers of 3 alpha and 3 beta subunits which, in turn, aggregate into a heterododecamer consisting of 2 heterohexamers. In terms of processing, contains two covalently linked bilin chromophores.

The protein resides in the cellular thylakoid membrane. Functionally, light-harvesting photosynthetic bile pigment-protein from the phycobiliprotein complex (phycobilisome, PBS). Phycocyanin is the major phycobiliprotein in the PBS rod. This Arthrospira platensis (Spirulina platensis) protein is C-phycocyanin beta subunit (cpcB).